A 158-amino-acid chain; its full sequence is Endoribonuclease YbeY (158 aa).

3 residues coordinate Zn(2+): His119, His123, and Asp129.

Belongs to the endoribonuclease YbeY family. The cofactor is Zn(2+).

The protein localises to the cytoplasm. Its function is as follows. Single strand-specific metallo-endoribonuclease involved in late-stage 70S ribosome quality control and in maturation of the 3' terminus of the 16S rRNA. The sequence is that of Endoribonuclease YbeY from Chlamydia pneumoniae (Chlamydophila pneumoniae).